The chain runs to 368 residues: N-acetylneuraminate epimerase (368 aa).

An N-terminal signal peptide occupies residues 1–19 (MNKTIMALAIMMASFAANA). Kelch repeat units lie at residues 40 to 84 (TVYI…AFID), 86 to 137 (NLYV…FVHN), 139 to 173 (KAYVTGGVNQNIFNGYFEDLNEAGKDSTAIDKINA), 174 to 219 (HYFD…VNKG), 222 to 265 (TWLI…VAGG), 287 to 336 (ENYQ…PWNN), and 338 to 367 (LLIIGGETAGGKAVTDSVLISVKDNKVTVQ). Glu228 (proton acceptor) is an active-site residue.

It belongs to the NanM family. In terms of assembly, homodimer.

The protein resides in the periplasm. The enzyme catalyses N-acetyl-alpha-neuraminate = N-acetyl-beta-neuraminate. Functionally, converts alpha-N-acetylneuranimic acid (Neu5Ac) to the beta-anomer, accelerating the equilibrium between the alpha- and beta-anomers. Probably facilitates sialidase-negative bacteria to compete successfully for limited amounts of extracellular Neu5Ac, which is likely taken up in the beta-anomer. In addition, the rapid removal of sialic acid from solution might be advantageous to the bacterium to damp down host responses. The chain is N-acetylneuraminate epimerase from Shigella sonnei (strain Ss046).